The chain runs to 306 residues: D-glucosamine-6-phosphate 4-epimerase (306 aa).

Residues 19-153 form the SIS domain; it reads DIPGVKTAEK…TGSNYRVQDL (135 aa). Catalysis depends on glutamate 200, which acts as the Proton acceptor. The Proton donor role is filled by histidine 216. The Proton acceptor role is filled by arginine 296.

This sequence belongs to the PGI/PMI family.

The enzyme catalyses D-glucosamine 6-phosphate = D-galactosamine 6-phosphate. Functionally, involved in the synthesis of UDP-N-acetylgalactosamine (UDP-GalNAc). Catalyzes the conversion of glucosamine-6-phosphate (GlcN-6-P) to galactosamine-6-phosphate (GalN-6-P). This Sulfolobus acidocaldarius (strain ATCC 33909 / DSM 639 / JCM 8929 / NBRC 15157 / NCIMB 11770) protein is D-glucosamine-6-phosphate 4-epimerase.